The sequence spans 639 residues: Extracellular metalloproteinase mep (639 aa).

The N-terminal stretch at 1 to 16 (MHMLSFIGALALPVFV) is a signal peptide. Positions 17-245 (CAQSCEPASL…IHGVVDYISE (229 aa)) are excised as a propeptide. N-linked (GlcNAc...) asparagine glycans are attached at residues Asn287, Asn320, Asn336, and Asn368. His429 is a binding site for Zn(2+). Glu430 is a catalytic residue. His433 contributes to the Zn(2+) binding site. Residue Asn509 is glycosylated (N-linked (GlcNAc...) asparagine).

Belongs to the peptidase M36 family. Zn(2+) is required as a cofactor.

The protein resides in the secreted. Its function is as follows. Secreted metalloproteinase that allows assimilation of proteinaceous substrates. The polypeptide is Extracellular metalloproteinase mep (mep) (Aspergillus flavus (strain ATCC 200026 / FGSC A1120 / IAM 13836 / NRRL 3357 / JCM 12722 / SRRC 167)).